The chain runs to 189 residues: dCTP deaminase (189 aa).

DCTP-binding positions include 112–117 (KSTYAR), 136–138 (TLE), Gln-157, Tyr-171, and Gln-181. Catalysis depends on Glu-138, which acts as the Proton donor/acceptor.

It belongs to the dCTP deaminase family. As to quaternary structure, homotrimer.

It catalyses the reaction dCTP + H2O + H(+) = dUTP + NH4(+). Its pathway is pyrimidine metabolism; dUMP biosynthesis; dUMP from dCTP (dUTP route): step 1/2. Functionally, catalyzes the deamination of dCTP to dUTP. This chain is dCTP deaminase, found in Halorhodospira halophila (strain DSM 244 / SL1) (Ectothiorhodospira halophila (strain DSM 244 / SL1)).